Here is a 74-residue protein sequence, read N- to C-terminus: Insertion element IS986 uncharacterized 8.2 kDa protein (74 aa).

This Mycobacterium tuberculosis protein is Insertion element IS986 uncharacterized 8.2 kDa protein.